The sequence spans 556 residues: 2-succinyl-5-enolpyruvyl-6-hydroxy-3-cyclohexene-1-carboxylate synthase (556 aa).

It belongs to the TPP enzyme family. MenD subfamily. Homodimer. Mg(2+) serves as cofactor. Requires Mn(2+) as cofactor. Thiamine diphosphate is required as a cofactor.

The enzyme catalyses isochorismate + 2-oxoglutarate + H(+) = 5-enolpyruvoyl-6-hydroxy-2-succinyl-cyclohex-3-ene-1-carboxylate + CO2. The protein operates within quinol/quinone metabolism; 1,4-dihydroxy-2-naphthoate biosynthesis; 1,4-dihydroxy-2-naphthoate from chorismate: step 2/7. It functions in the pathway quinol/quinone metabolism; menaquinone biosynthesis. Catalyzes the thiamine diphosphate-dependent decarboxylation of 2-oxoglutarate and the subsequent addition of the resulting succinic semialdehyde-thiamine pyrophosphate anion to isochorismate to yield 2-succinyl-5-enolpyruvyl-6-hydroxy-3-cyclohexene-1-carboxylate (SEPHCHC). This is 2-succinyl-5-enolpyruvyl-6-hydroxy-3-cyclohexene-1-carboxylate synthase from Citrobacter koseri (strain ATCC BAA-895 / CDC 4225-83 / SGSC4696).